The primary structure comprises 358 residues: Ganglioside-induced differentiation-associated protein 1 (358 aa).

Residues 24-105 (VKLILYHWTH…YLEQTFLDER (82 aa)) form the GST N-terminal domain. Glycyl lysine isopeptide (Lys-Gly) (interchain with G-Cter in ubiquitin) cross-links involve residues K50, K172, K173, K188, and K190. Residues 153–309 (PAYATTRIRS…LISAVLPTAF (157 aa)) form the GST C-terminal domain. The residue at position 203 (K203) is an N6-acetyllysine; alternate. K203 participates in a covalent cross-link: Glycyl lysine isopeptide (Lys-Gly) (interchain with G-Cter in ubiquitin); alternate. Residues K206, K207, and K214 each participate in a glycyl lysine isopeptide (Lys-Gly) (interchain with G-Cter in ubiquitin) cross-link. Helical transmembrane passes span 292-312 (VLGH…FRVA) and 320-340 (LGTT…FMLF). The interval 320–358 (LGTTLVVGLLAGVGYFAFMLFRKRLGSMILAFRPRPNYF) is required for mitochondrial localization.

The protein belongs to the GST superfamily. Homodimer. Ubiquitinated by PRKN during mitophagy, leading to its degradation and enhancement of mitophagy. Deubiquitinated by USP30. In terms of tissue distribution, highly expressed in whole brain and spinal cord. Predominant expression in central tissues of the nervous system not only in neurons but also in Schwann cells.

The protein localises to the mitochondrion outer membrane. It is found in the cytoplasm. Functionally, regulates the mitochondrial network by promoting mitochondrial fission. The polypeptide is Ganglioside-induced differentiation-associated protein 1 (GDAP1) (Homo sapiens (Human)).